Reading from the N-terminus, the 473-residue chain is MKSFKNKNTLRRKKAFPVFTKILLVSFLVWVLKCSNNCNNGNGSGDSFDFRNKRTLAQKQHEHHHHHHHQHQHQHQAPHQAHHHHHHGEVNHQAPQVHQQVHGQDQAHHHHHHHHHQLQPQQLQGTVANPPSNEPVVKTQVFREARPGGGFKAYEEKYESKHYKLKENVVDGKKDCDEKYEAANYAFSEECPYTVNDYSQENGPNIFALRKRFPLGMNDEDEEGKEALAIKDKLPGGLDEYQNQLYGICNETCTTCGPAAIDYVPADAPNGYAYGGSAHDGSHGNLRGHGNKGSEGYGYEAPYNPGFNGAPGSNGMQNYVPPHGAGYSAPYGVPHGAAHGSRYSSFSSVNKYGKHGDEKHHSSKKHEGNDGEGEKKKKSKKHKDHDGEKKKSKKHKDNEDAESVKSKKHKSHDCEKKKSKKHKDNEDAESVKSKKSVKEKGEKHNGKKPCSKKTNEENKNKEKTNNLKSDGSK.

The signal sequence occupies residues 1 to 34; sequence MKSFKNKNTLRRKKAFPVFTKILLVSFLVWVLKC. Asparagine 42 carries an N-linked (GlcNAc...) asparagine glycan. Residues 57–87 are compositionally biased toward basic residues; it reads AQKQHEHHHHHHHQHQHQHQAPHQAHHHHHH. Disordered stretches follow at residues 57-143 and 347-473; these read AQKQ…QVFR and SSVN…DGSK. Over residues 95 to 104 the composition is skewed to low complexity; sequence PQVHQQVHGQ. Residues 108–117 show a composition bias toward basic residues; the sequence is HHHHHHHHHQ. 2 stretches are compositionally biased toward basic and acidic residues: residues 354-375 and 396-405; these read KHGD…EGEK and KDNEDAESVK. A compositionally biased stretch (basic residues) spans 406 to 422; that stretch reads SKKHKSHDCEKKKSKKH. 2 stretches are compositionally biased toward basic and acidic residues: residues 423 to 444 and 453 to 473; these read KDNE…GEKH and KTNE…DGSK.

The protein resides in the secreted. In terms of biological role, KAHRP might mimick human histidine-rich glycoproteins to anchor host thrombospondin or a parasite analog in a binding complex with the endothelial cell receptor. The polypeptide is Knob-associated histidine-rich protein (Plasmodium falciparum).